The primary structure comprises 61 residues: [Thr6]-bradykinyl-Val,Asp (61 aa).

Residues Met-1–Cys-22 form the signal peptide. Residues Glu-23–Glu-50 constitute a propeptide that is removed on maturation. Residues Glu-24–Asp-61 form a disordered region. A compositionally biased stretch (acidic residues) spans Lys-26–Arg-36. Over residues Glu-37–Pro-52 the composition is skewed to basic and acidic residues. Pro-53 bears the 4-hydroxyproline; in form [Hyp3,Thr6]-bradykinyl-Val,Asp and [Hyp3,Thr6]-bradykinin mark.

Belongs to the frog skin active peptide (FSAP) family. Bradykinin-related peptide subfamily. Expressed by the skin glands.

The protein resides in the secreted. Induces relaxation of rat smooth muscle from tail artery (EC(50)=16.8 nM) and contraction of that from ileum (EC(50)=205 nM), urinary bladder (EC(50)=895 nM) and uterus (EC(50)=60.3 nM). Binds to both bradykinin receptor B1 (BDKRB1) and B2 (BDKRB2). Its function is as follows. [Hyp3,Thr6]-bradykinin: Induces relaxation of rat smooth muscle from tail artery (EC(50)=56.7 nM) and contraction of that from ileum (EC(50)=588 nM), urinary bladder (EC(50)=4.6 uM) and uterus (EC(50)=3.9 nM). Binds to both bradykinin receptor B1 (BDKRB1) and B2 (BDKRB2). In arterial smooth muscle, the effect via BDKRB1 is stronger, in uterus, ileum and urinary bladder the effect via BDKRB2. Functionally, induces relaxation of rat smooth muscle from tail artery (EC(50)=10.8 nM) and contraction of that from ileum (EC(50)=645 nM), urinary bladder (EC(50)=1.1 uM) and uterus (EC(50)=1.2 uM). Binds to both bradykinin receptor B1 (BDKRB1) and B2 (BDKRB2). Apart from uterus smooth muscle, the effect via BDKRB2 is stronger. In terms of biological role, [Hyp3,Thr6]-bradykinyl-Val,Asp: Induces relaxation of rat smooth muscle from tail artery (EC(50)=3.5 nM) and contraction of that from ileum (EC(50)=223 nM), urinary bladder (EC(50)=1.5 uM) and uterus (EC(50)=356 nM). Binds to both bradykinin receptor B1 (BDKRB1) and B2 (BDKRB2); the effects via BDKRB2 are stronger. This chain is [Thr6]-bradykinyl-Val,Asp, found in Agalychnis dacnicolor (Giant Mexican leaf frog).